The chain runs to 142 residues: Small ribosomal subunit protein bS16 (142 aa).

Residues 88–142 (GAEGTLRQPEGKTPFVAPDNGSVIIPEAITPKAEKAEEAPAEDAAPAEDDAEKAE) form a disordered region. The segment covering 126–142 (APAEDAAPAEDDAEKAE) has biased composition (acidic residues).

The protein belongs to the bacterial ribosomal protein bS16 family.

The polypeptide is Small ribosomal subunit protein bS16 (Kocuria rhizophila (strain ATCC 9341 / DSM 348 / NBRC 103217 / DC2201)).